The following is a 91-amino-acid chain: Defensin-like protein 269 (91 aa).

Positions 1-25 are cleaved as a signal peptide; sequence MAVSKTTMLIVLVAIILSCVSISNA. Intrachain disulfides connect Cys41–Cys82, Cys53–Cys72, Cys59–Cys77, and Cys63–Cys79.

Belongs to the DEFL family.

Its subcellular location is the secreted. The chain is Defensin-like protein 269 from Arabidopsis thaliana (Mouse-ear cress).